The chain runs to 295 residues: Ankyrin repeat and SOCS box protein 17 (295 aa).

An ANK repeat occupies 146-176 (SGITPLLYVAQTRQSNILKILLQYGILEREK). The 64-residue stretch at 232–295 (LGRRPIISNW…RLQKYLNLES (64 aa)) folds into the SOCS box domain.

This sequence belongs to the ankyrin SOCS box (ASB) family.

It participates in protein modification; protein ubiquitination. In terms of biological role, may be a substrate-recognition component of a SCF-like ECS (Elongin-Cullin-SOCS-box protein) E3 ubiquitin-protein ligase complex which mediates the ubiquitination and subsequent proteasomal degradation of target proteins. The chain is Ankyrin repeat and SOCS box protein 17 (ASB17) from Canis lupus familiaris (Dog).